Reading from the N-terminus, the 81-residue chain is N.vectensis toxin 4 (81 aa).

Positions Met1–Gly20 are cleaved as a signal peptide. Intrachain disulfides connect Cys46-Cys75, Cys48-Cys70, and Cys63-Cys76.

In terms of tissue distribution, expressed in ectodermal gland cells. In adult female tissues, highly transcribed in mesenteries (gametes-producing tissue) and slightly transcribed in tentacles, pharynx and physa.

Its function is as follows. Has toxic effects on zebrafish larvae. It causes contractile paralysis and twitching of the tail within 30 minutes, followed by death within 40 minutes. Does not show any toxicity when injected into arthropods (cherry shrimps or grass shrimps). In Nematostella vectensis (Starlet sea anemone), this protein is N.vectensis toxin 4.